Consider the following 102-residue polypeptide: A-type ATP synthase subunit F (102 aa).

The protein belongs to the V-ATPase F subunit family. In terms of assembly, has multiple subunits with at least A(3), B(3), C, D, E, F, H, I and proteolipid K(x).

It localises to the cell membrane. Functionally, component of the A-type ATP synthase that produces ATP from ADP in the presence of a proton gradient across the membrane. The chain is A-type ATP synthase subunit F from Thermococcus sibiricus (strain DSM 12597 / MM 739).